A 753-amino-acid chain; its full sequence is Taperin (753 aa).

Residues 141-348 (FDSPAAPRRR…IRPSSKPDME (208 aa)) are disordered. The span at 182–197 (PAPPVLPSQPAPPISP) shows a compositional bias: pro residues. Polar residues-rich tracts occupy residues 230–239 (LQKTGSNSFT) and 250–263 (VNRS…TQES). The residue at position 274 (Ser-274) is a Phosphoserine. Residues 300–322 (TPSATPVGPPAFLAPSPASATPS) show a composition bias toward low complexity. The span at 323–335 (QRQWVSSATSAND) shows a compositional bias: polar residues. The segment covering 337–347 (FEIRPSSKPDM) has biased composition (basic and acidic residues). Phosphoserine occurs at positions 402, 458, and 502. Residues 438 to 488 (GCPRPAISDTDKSVRRQRPASPPPFLPATTEAEPAEGLGVPGLTKNGQEPV) form a disordered region. 2 disordered regions span residues 544-583 (FTVV…SGPH) and 637-676 (FEYP…DSEK). Residues 559 to 571 (HLSQTNGQFQQGA) show a composition bias toward polar residues. Residues 648 to 672 (EEAEEEEEEEEEEEGEDGEEEEVGP) are compositionally biased toward acidic residues.

This sequence belongs to the taperin family. Interacts with GRXCR2; the interaction restricts TPRN to the stereocilum basal region. Interacts with actin ACTB; the interaction may stabilize stereocilia. Interacts with CLIC5. Interacts with PTPRQ. TPRN, CLIC5 and PTPQR form concentric rings at the base of stereocilia and may form a complex. Interacts with phosphatase PPP1CA; the interaction results in inhibition of PPC1A phosphatase activity. Interacts with DNA damage response proteins XRCC6/KU70, XRCC5/KU80, PARP1, TOP1 and TOP2A; these interactions recruit TPRN to sites of DNA damage where it may play a role in DNA repair.

It is found in the cell projection. Its subcellular location is the stereocilium. It localises to the microvillus. The protein resides in the nucleus. The protein localises to the nucleoplasm. It is found in the cytoplasm. Essential for hearing. Required for maintenance of stereocilia on both inner and outer hair cells. Necessary for the integrity of the stereociliary rootlet. May act as an actin cytoskeleton regulator involved in the regulation of actin dynamics at the pointed end in hair cells. Forms rings at the base of stereocilia and binds actin filaments in the stereocilia which may stabilize the stereocilia. Acts as a strong inhibitor of PPP1CA phosphatase activity. Recruited to sites of DNA damage and may play a role in DNA damage repair. This chain is Taperin (Tprn), found in Rattus norvegicus (Rat).